A 708-amino-acid polypeptide reads, in one-letter code: MERLIDNSHGWPGRMVWLLAACLGSAAAFAQTGPAAQAAAAVQRVDGDFIRANAARTPDWPTIGVDYAETRYSRLDQINAANVKDLGLAWSYNLESTRGVEATPVVVDGIMYVSASWSVVHAIDTRTGNRIWTYDPQIDRSTGFKGCCDVVNRGVALWKGKVYVGAWDGRLIALDAATGKEVWHQNTFEGQKGSLTITGAPRVFKGKVIIGKRGAEYGVRGYITAYDAETGERKWRWFSVPGDPSKPFEDESMKRAARTWDPSGKWWEAGGGGTMWDSMTFDAELNTMYVGTGNGSPWSHKVRSPKGGDNLYLASIVALDPDTGKYKWHYQETPGDNWDYTSTQPMILADIKIAGKPRKVILHAPKNGFFFVLDRTNGKFISAKNFVPVNWASGYDKHGKPIGIAAARDGSKPQDAVPGPYGAHNWHPMSFNPQTGLVYLPAQNVPVNLMDDKKWEFNQAGPGKPQSGTGWNTAKFFNAEPPKSKPFGRLLAWDPVAQKAAWSVEHVSPWNGGTLTTAGNVVFQGTADGRLVAYHAATGEKLWEAPTGTGVVAAPSTYMVDGRQYVSVAVGWGGVYGLAARATERQGPGTVYTFVVAGKARMPEFVAQRTGQLLQGVKYDPAKVEAGTMLYVANCVFCHGVPGVDRGGNIPNLGYMDASYIENLPNFVFKGPAMVRGMPDFTGKLSGDDVESLKAFIQGTADAIRPKP.

The N-terminal stretch at 1 to 31 (MERLIDNSHGWPGRMVWLLAACLGSAAAFAQ) is a signal peptide. Glu-101 serves as a coordination point for pyrroloquinoline quinone. Cys-147 and Cys-148 are oxidised to a cystine. Pyrroloquinoline quinone contacts are provided by residues Arg-153, Thr-198, and 214 to 215 (GA). Glu-216 contacts Ca(2+). Thr-274 contributes to the pyrroloquinoline quinone binding site. 2 residues coordinate Ca(2+): Asn-294 and Asp-339. Catalysis depends on Asp-339, which acts as the Proton acceptor. Pyrroloquinoline quinone is bound by residues Lys-366, 425-426 (NW), and Val-575. The 90-residue stretch at 619 to 708 (YDPAKVEAGT…GTADAIRPKP (90 aa)) folds into the Cytochrome c domain. The heme c site is built by Cys-635, Cys-638, His-639, and Met-678.

Belongs to the bacterial PQQ dehydrogenase family. In terms of assembly, monomer. The cofactor is pyrroloquinoline quinone. Requires Ca(2+) as cofactor. It depends on heme c as a cofactor. In the crystallographic structures Trp-543 is oxidized to 2'-hydroxytryptophan.

It is found in the periplasm. It catalyses the reaction 2 oxidized [azurin] + a primary alcohol = 2 reduced [azurin] + an aldehyde + 2 H(+). In terms of biological role, catalyzes the dye-linked oxidation of primary alcohols to the corresponding aldehydes and the (subsequent) oxidation of the aldehydes to carboxylic acids. Methanol is not a substrate. The polypeptide is Quinohemoprotein alcohol dehydrogenase (Comamonas testosteroni (Pseudomonas testosteroni)).